The sequence spans 284 residues: TnP I resolvase (284 aa).

Residues Met1–Ile84 form the Core-binding (CB) domain. The Tyr recombinase domain maps to Ala107 to Glu282. Active-site residues include Arg145, Lys170, His234, Arg237, and His260. Tyr269 functions as the O-(3'-phospho-DNA)-tyrosine intermediate in the catalytic mechanism.

This sequence belongs to the 'phage' integrase family.

Its function is as follows. Resolvase catalyzes the resolution (a site-specific recombination) of the cointegrated replicon to yield the final transposition products. The polypeptide is TnP I resolvase (tnpI) (Bacillus thuringiensis).